Consider the following 122-residue polypeptide: Large ribosomal subunit protein uL14 (122 aa).

The protein belongs to the universal ribosomal protein uL14 family. Part of the 50S ribosomal subunit. Forms a cluster with proteins L3 and L19. In the 70S ribosome, L14 and L19 interact and together make contacts with the 16S rRNA in bridges B5 and B8.

In terms of biological role, binds to 23S rRNA. Forms part of two intersubunit bridges in the 70S ribosome. The sequence is that of Large ribosomal subunit protein uL14 from Nocardia farcinica (strain IFM 10152).